A 175-amino-acid chain; its full sequence is uncharacterized protein (175 aa).

This is an uncharacterized protein from Bacillus subtilis (strain 168).